An 801-amino-acid polypeptide reads, in one-letter code: MSLLHIAVILPLIFALIIPILYRFFKRIHLGWFVLPVPIVIFIYMLTLIKTTMSGNTVMKTLNWMPHFGMNFDLYLDGLGLLFSLLISGIGSLVVLYSIGYLSKSEQLGNFYCYLLLFMGAMLGVVLSDNVIILYLFWELTSFSSFLLISFWRERQASIYGAQKSLIITVFGGLSLLGGIILLAIPTQSFSIQYMIQHASEIQNSPFFIFAMILIMIGAFTKSAQFPFYIWLPDAMEAPTPVSAYLHSATMVKAGLYLIARMTPIFAASQGWVWTVTLVGLITLFWASLNATKQQDLKGILAFSTVSQLGMIMAMLGIGAISYHYQGDDSKIYAAAFTAAIFHLINHATFKGALFMITGAVDHSTGTRDVKKLGGLLTIMPISFTITVITALSMAGVPPFNGFLSKESFLETTFTASQANLFSVDTLGYLFPIIGIVGSVFTFVYSIKFIMHIFFGQYKPEQLPKKAHEVSILMLLSPAILATLVIVLGLFPGILTNSIIEPATSSINHTVIDDVEFHMFHGLTPAFLSTLVIYILGILLIVTFSYWVKLLQRQPGKLTFNYWYNRSANVIPNYSEKMTNSYVTDYSRNNLVIIFGALILLTFVTIFSVPFNINFKDVSPIRIFEVCIVILLLSAAFLILFAKSRLFSIIMLSAVGYAVSVLFIFFKAPDLALTQFVVESISTALFLLCFYHLPNLNRYNEKRSFQLTNALIAGGVGLSVIIIGLIAYGNRHFESISKFYQEHVYDLAHGKNMVNVILVDFRGMDTLFESSVLGIAGLAVYTMIKLRKKRQTQGNEVKNHE.

19 helical membrane passes run 1–21 (MSLL…IPIL), 28–48 (IHLG…MLTL), 79–99 (LGLL…LYSI), 117–137 (LFMG…LYLF), 166–186 (LIIT…LAIP), 206–226 (PFFI…SAQF), 265–285 (IFAA…ITLF), 300–320 (ILAF…GIGA), 337–357 (FTAA…LFMI), 373–393 (LGGL…TALS), 427–447 (LGYL…VYSI), 472–492 (ILML…GLFP), 522–542 (GLTP…LLIV), 591–611 (LVII…SVPF), 623–643 (IFEV…LFAK), 646–666 (LFSI…FIFF), 671–691 (LALT…LCFY), 707–727 (LTNA…GLIA), and 764–784 (MDTL…YTMI).

The protein belongs to the CPA3 antiporters (TC 2.A.63) subunit A family. May form a heterooligomeric complex that consists of seven subunits: mnhA1, mnhB1, mnhC1, mnhD1, mnhE1, mnhF1 and mnhG1.

It is found in the cell membrane. In terms of biological role, mnh complex is a Na(+)/H(+) antiporter involved in Na(+) excretion. The sequence is that of Na(+)/H(+) antiporter subunit A1 (mnhA1) from Staphylococcus aureus (strain Mu3 / ATCC 700698).